Here is a 155-residue protein sequence, read N- to C-terminus: Small ribosomal subunit protein uS7 (155 aa).

This sequence belongs to the universal ribosomal protein uS7 family. In terms of assembly, part of the 30S ribosomal subunit. Contacts proteins S9 and S11.

Its function is as follows. One of the primary rRNA binding proteins, it binds directly to 16S rRNA where it nucleates assembly of the head domain of the 30S subunit. Is located at the subunit interface close to the decoding center, probably blocks exit of the E-site tRNA. The polypeptide is Small ribosomal subunit protein uS7 (Halorhodospira halophila (strain DSM 244 / SL1) (Ectothiorhodospira halophila (strain DSM 244 / SL1))).